A 580-amino-acid chain; its full sequence is NADH-ubiquinone oxidoreductase chain 5 (580 aa).

16 helical membrane-spanning segments follow: residues 12 to 32 (FYILIFISFTLFILSLKFLLM), 50 to 70 (IVMTFLFDWMSLMFMSFVLLI), 92 to 112 (ILLVLMFVMSMMMLIISPNLI), 113 to 133 (SILLGWDGLGLVSYCLVIYFQ), 153 to 173 (VALLLAIAWMLNYGSWNYIFY), 176 to 196 (MMKNNFEMMVIGGLVMLAAMT), 218 to 240 (SALVHSSTLVTAGVYLLIRFNIL), 249 to 269 (FLLLVSGLTMFMAGLGANFEF), 274 to 294 (IIALSTLSQLGLMMSILSIGY), 300 to 320 (FHLLTHALFKALLFMCAGVII), 343 to 363 (CSCFNIANLALCGMPFLAGFY), 378 to 400 (NFFSFFLFFFSTGLTVCYSFRLV), 427 to 447 (IFFLMVMAIIGGSMLSWLMFF), 464 to 484 (MVCLLGGFTGYLISNVNFFFI), 500 to 520 (MWFMPLISTVGVVKWPLILGM), and 560 to 580 (IYLLSYMLWVIILVSMMLFLN).

Belongs to the complex I subunit 5 family.

The protein localises to the mitochondrion inner membrane. It carries out the reaction a ubiquinone + NADH + 5 H(+)(in) = a ubiquinol + NAD(+) + 4 H(+)(out). In terms of biological role, core subunit of the mitochondrial membrane respiratory chain NADH dehydrogenase (Complex I) that is believed to belong to the minimal assembly required for catalysis. Complex I functions in the transfer of electrons from NADH to the respiratory chain. The immediate electron acceptor for the enzyme is believed to be ubiquinone. This is NADH-ubiquinone oxidoreductase chain 5 from Aedes aegypti (Yellowfever mosquito).